Here is a 210-residue protein sequence, read N- to C-terminus: Large ribosomal subunit protein uL4 (210 aa).

The disordered stretch occupies residues 44–79; sequence QHQGTHKVKTRSEVSGGGRKPYRQKGTGNARRGSSR.

The protein belongs to the universal ribosomal protein uL4 family. In terms of assembly, part of the 50S ribosomal subunit.

One of the primary rRNA binding proteins, this protein initially binds near the 5'-end of the 23S rRNA. It is important during the early stages of 50S assembly. It makes multiple contacts with different domains of the 23S rRNA in the assembled 50S subunit and ribosome. Its function is as follows. Forms part of the polypeptide exit tunnel. The protein is Large ribosomal subunit protein uL4 of Chloroherpeton thalassium (strain ATCC 35110 / GB-78).